The chain runs to 77 residues: Large ribosomal subunit protein bL28 (77 aa).

Positions 1–20 are disordered; the sequence is MSRVCQVTGKGPVTGNNISH.

The protein belongs to the bacterial ribosomal protein bL28 family.

The protein is Large ribosomal subunit protein bL28 of Pseudomonas fluorescens (strain Pf0-1).